Consider the following 136-residue polypeptide: MTYAIIETGGKQLRVEAGRFYDIDLLSGSEGDRISINNVLLVQNDGDVHIGQPLVEGALIEGTIMKHLRGKKIIVYKMRPKKKTRKKRGHRQELTRLMIDSISLNGKVLASLEKSLVEKPESSVMEVTSETTETVT.

It belongs to the bacterial ribosomal protein bL21 family. Part of the 50S ribosomal subunit. Contacts protein L20.

This protein binds to 23S rRNA in the presence of protein L20. In Trichodesmium erythraeum (strain IMS101), this protein is Large ribosomal subunit protein bL21.